We begin with the raw amino-acid sequence, 65 residues long: UPF0434 protein Mpe_A2486 (65 aa).

It belongs to the UPF0434 family.

This chain is UPF0434 protein Mpe_A2486, found in Methylibium petroleiphilum (strain ATCC BAA-1232 / LMG 22953 / PM1).